We begin with the raw amino-acid sequence, 29 residues long: Snake venom metalloproteinase bothrolysin (29 aa).

Residues 6–29 (RYIELFLVVDSGMFMKYNGNSDKI) form the Peptidase M12B domain. Glutamate 9 contacts Ca(2+).

This sequence belongs to the venom metalloproteinase (M12B) family. The cofactor is Zn(2+). In terms of tissue distribution, expressed by the venom gland.

Its subcellular location is the secreted. It carries out the reaction Cleavage of 4-Gln-|-His-5, 9-Ser-|-His-10 and 14-Ala-|-Leu-15 of insulin B chain and Pro-|-Phe of angiotensin I.. Its function is as follows. Snake venom zinc metalloproteinase that impairs hemostasis in the envenomed animal. The chain is Snake venom metalloproteinase bothrolysin from Bothrops jararaca (Jararaca).